The primary structure comprises 447 residues: Methyl-coenzyme M reductase II subunit beta (447 aa).

Coenzyme M is bound at residue Y368. G370 lines the coenzyme B pocket.

It belongs to the methyl-coenzyme M reductase beta subunit family. As to quaternary structure, MCR is a hexamer of two alpha, two beta, and two gamma chains, forming a dimer of heterotrimers. It depends on coenzyme F430 as a cofactor.

The catalysed reaction is coenzyme B + methyl-coenzyme M = methane + coenzyme M-coenzyme B heterodisulfide. Its pathway is one-carbon metabolism; methyl-coenzyme M reduction; methane from methyl-coenzyme M: step 1/1. Functionally, component of the methyl-coenzyme M reductase (MCR) I that catalyzes the reductive cleavage of methyl-coenzyme M (CoM-S-CH3 or 2-(methylthio)ethanesulfonate) using coenzyme B (CoB or 7-mercaptoheptanoylthreonine phosphate) as reductant which results in the production of methane and the mixed heterodisulfide of CoB and CoM (CoM-S-S-CoB). This is the final step in methanogenesis. The sequence is that of Methyl-coenzyme M reductase II subunit beta (mrtB) from Methanocaldococcus jannaschii (strain ATCC 43067 / DSM 2661 / JAL-1 / JCM 10045 / NBRC 100440) (Methanococcus jannaschii).